The sequence spans 130 residues: Glycine cleavage system H protein (130 aa).

The Lipoyl-binding domain occupies 22–103 (QAWIGISDYA…PYANYIVVVA (82 aa)). Position 63 is an N6-lipoyllysine (K63).

This sequence belongs to the GcvH family. The glycine cleavage system is composed of four proteins: P, T, L and H. The cofactor is (R)-lipoate.

In terms of biological role, the glycine cleavage system catalyzes the degradation of glycine. The H protein shuttles the methylamine group of glycine from the P protein to the T protein. In Syntrophomonas wolfei subsp. wolfei (strain DSM 2245B / Goettingen), this protein is Glycine cleavage system H protein.